Consider the following 183-residue polypeptide: (2E)-enoyl-[ACP] glycyltransferase (183 aa).

Belongs to the FcoT family.

The catalysed reaction is a (3R)-3-[(carboxymethyl)amino]fatty acid + holo-[ACP] + H(+) = a (2E)-enoyl-[ACP] + glycine + H2O. It catalyses the reaction (3R)-3-[(carboxylmethyl)amino]decanoate + holo-[ACP] + H(+) = (2E)-decenoyl-[ACP] + glycine + H2O. It carries out the reaction a fatty acyl-CoA + H2O = a fatty acid + CoA + H(+). In terms of biological role, involved in the biosynthesis of a unique class of isonitrile lipopeptides (INLPs) that seem to play a role in metal acquisition. Catalyzes a Michael addition of glycine to the beta-position of an alpha,beta-unsaturated fatty acyl-[ACP], producing a (3R)-3-[(carboxymethyl)amino]fatty acid. Acts on the (2E)-decenoyl moiety loaded on the acyl-carrier protein (ACP) BQ2027_MB0103, forming the product (3R)-3-[(carboxymethyl)amino]decanoate released from the ACP. Displays thioesterase activity with a preference for long chain fatty acyl groups. In Mycobacterium bovis (strain ATCC BAA-935 / AF2122/97), this protein is (2E)-enoyl-[ACP] glycyltransferase.